Reading from the N-terminus, the 326-residue chain is DNA polymerase III subunit delta' (326 aa).

As to quaternary structure, DNA polymerase III contains a core (composed of alpha, epsilon and theta chains) that associates with a tau subunit. This core dimerizes to form the POLIII' complex. PolIII' associates with the gamma complex (composed of gamma, delta, delta', psi and chi chains) and with the beta chain to form the complete DNA polymerase III complex.

It carries out the reaction DNA(n) + a 2'-deoxyribonucleoside 5'-triphosphate = DNA(n+1) + diphosphate. In terms of biological role, DNA polymerase III is a complex, multichain enzyme responsible for most of the replicative synthesis in bacteria. This DNA polymerase also exhibits 3' to 5' exonuclease activity. This is DNA polymerase III subunit delta' (holB) from Buchnera aphidicola subsp. Acyrthosiphon pisum (strain APS) (Acyrthosiphon pisum symbiotic bacterium).